The chain runs to 359 residues: Ribosome biogenesis protein BRX1 homolog (359 aa).

Basic residues predominate over residues 1–12 (MGRKFQNKKKKA). The interval 1-42 (MGRKFQNKKKKAAPQLEIVPLDENPPLPPQRSSDDVVPKKAR) is disordered. The Brix domain occupies 50 to 241 (QRVLVFSARG…PVKIFDGSFT (192 aa)).

Belongs to the BRX1 family.

It is found in the nucleus. The protein localises to the nucleolus. In terms of biological role, required for biogenesis of the 60S ribosomal subunit. The polypeptide is Ribosome biogenesis protein BRX1 homolog (Drosophila melanogaster (Fruit fly)).